The chain runs to 376 residues: Alanine racemase (376 aa).

Lysine 40 acts as the Proton acceptor; specific for D-alanine in catalysis. Lysine 40 is subject to N6-(pyridoxal phosphate)lysine. Substrate is bound at residue arginine 138. Tyrosine 270 functions as the Proton acceptor; specific for L-alanine in the catalytic mechanism. Residue methionine 317 coordinates substrate.

The protein belongs to the alanine racemase family. The cofactor is pyridoxal 5'-phosphate.

It carries out the reaction L-alanine = D-alanine. Its pathway is amino-acid biosynthesis; D-alanine biosynthesis; D-alanine from L-alanine: step 1/1. Functionally, catalyzes the interconversion of L-alanine and D-alanine. May also act on other amino acids. The protein is Alanine racemase (alr) of Lactobacillus gasseri (strain ATCC 33323 / DSM 20243 / BCRC 14619 / CIP 102991 / JCM 1131 / KCTC 3163 / NCIMB 11718 / NCTC 13722 / AM63).